The sequence spans 360 residues: Phenylalanine--tRNA ligase alpha subunit (360 aa).

A Mg(2+)-binding site is contributed by E260.

The protein belongs to the class-II aminoacyl-tRNA synthetase family. Phe-tRNA synthetase alpha subunit type 1 subfamily. As to quaternary structure, tetramer of two alpha and two beta subunits. It depends on Mg(2+) as a cofactor.

Its subcellular location is the cytoplasm. The catalysed reaction is tRNA(Phe) + L-phenylalanine + ATP = L-phenylalanyl-tRNA(Phe) + AMP + diphosphate + H(+). The polypeptide is Phenylalanine--tRNA ligase alpha subunit (Bradyrhizobium diazoefficiens (strain JCM 10833 / BCRC 13528 / IAM 13628 / NBRC 14792 / USDA 110)).